The sequence spans 150 residues: Large ribosomal subunit protein bL9 (150 aa).

It belongs to the bacterial ribosomal protein bL9 family.

Binds to the 23S rRNA. This Staphylococcus aureus (strain NCTC 8325 / PS 47) protein is Large ribosomal subunit protein bL9.